Reading from the N-terminus, the 851-residue chain is Alanine--tRNA ligase (851 aa).

Positions 535, 539, 637, and 641 each coordinate Zn(2+).

It belongs to the class-II aminoacyl-tRNA synthetase family. Requires Zn(2+) as cofactor.

It localises to the cytoplasm. The enzyme catalyses tRNA(Ala) + L-alanine + ATP = L-alanyl-tRNA(Ala) + AMP + diphosphate. Its function is as follows. Catalyzes the attachment of alanine to tRNA(Ala) in a two-step reaction: alanine is first activated by ATP to form Ala-AMP and then transferred to the acceptor end of tRNA(Ala). Also edits incorrectly charged Ser-tRNA(Ala) and Gly-tRNA(Ala) via its editing domain. The sequence is that of Alanine--tRNA ligase from Acholeplasma laidlawii (strain PG-8A).